Here is a 146-residue protein sequence, read N- to C-terminus: Large ribosomal subunit protein uL15 (146 aa).

The segment covering 1-13 (MKLHELKPAEGSR) has biased composition (basic and acidic residues). Residues 1–56 (MKLHELKPAEGSRKVRNRVGRGAATGNGKTSGRGQKGQKARSGGSVRPGFEGGQLP) are disordered. A compositionally biased stretch (gly residues) spans 23 to 35 (AATGNGKTSGRGQ).

Belongs to the universal ribosomal protein uL15 family. As to quaternary structure, part of the 50S ribosomal subunit.

In terms of biological role, binds to the 23S rRNA. The sequence is that of Large ribosomal subunit protein uL15 from Staphylococcus saprophyticus subsp. saprophyticus (strain ATCC 15305 / DSM 20229 / NCIMB 8711 / NCTC 7292 / S-41).